The sequence spans 252 residues: MSGKGKVIIKLPKTVIPVKHVEPVLIDVDKLLPHEEIVPGRLKDLMEKIRSEGVVDMPIIVTPIPGIDKYLVVDGHHRWAAVKELGYKKVPAIIIDYFDENVKLKTWYPAIIGSINKLLEEIKKEGIRIEECKGKDDVLKDEELGKYAFVIIGKNNECYKIYGSINEQKIVSKILSKLNLEGEYTLVYYGEKDEALRDLEEGKIDYLFLRKPPTKNEVIEIAKRNQVYSPKTTRHILPYIPAITNTPLDKLK.

Glu-35 is an active-site residue. Val-73 lines the O-phospho-L-serine pocket. Asp-74 is a Mg(2+) binding site. The O-phospho-L-serine site is built by Gly-75, His-76, His-77, Trp-107, Lys-231, Thr-233, and His-235.

The protein belongs to the SerK family. As to quaternary structure, monomer. Mg(2+) is required as a cofactor.

It carries out the reaction L-serine + ATP = O-phospho-L-serine + ADP + H(+). Functionally, free serine kinase that uses ATP to phosphorylate L-serine to yield O-phospho-L-serine and ADP. Can use ATP, UTP, CTP, GTP and the inorganic polyphosphates triphosphate and tetraphosphate as phosphate donors, with a preference for nucleoside 5'-triphosphates, but cannot use ADP. The catalytic efficiency is highest for ATP. Is specific for L-serine and cannot phosphorylate structurally similar compounds such as D-serine, L-threonine, L-homoserine, hydroxypyruvate, 3-hydroxypropionate and DL-glycerate. Likely contributes to serine metabolism, including cysteine biosynthesis. This is ATP-dependent L-serine kinase from Staphylothermus marinus (strain ATCC 43588 / DSM 3639 / JCM 9404 / F1).